Here is a 330-residue protein sequence, read N- to C-terminus: B3 domain-containing protein REM21 (330 aa).

The TF-B3 DNA-binding region spans P23–G116. The span at E129 to N138 shows a compositional bias: acidic residues. The tract at residues E129–S169 is disordered. The segment covering H142–N162 has biased composition (low complexity).

Its subcellular location is the nucleus. The protein is B3 domain-containing protein REM21 (REM21) of Arabidopsis thaliana (Mouse-ear cress).